The primary structure comprises 440 residues: Ribosomal protein uS12 methylthiotransferase RimO (440 aa).

The MTTase N-terminal domain maps to 5–116 (PTIAISHLGC…IVSVIERAEQ (112 aa)). The [4Fe-4S] cluster site is built by cysteine 14, cysteine 50, cysteine 79, cysteine 154, cysteine 158, and cysteine 161. In terms of domain architecture, Radical SAM core spans 140–370 (TTTEGVAYLR…ALQQPISWRK (231 aa)). Residues 372 to 438 (QQEVGKTVEV…EYDLFGQVVS (67 aa)) form the TRAM domain.

Belongs to the methylthiotransferase family. RimO subfamily. It depends on [4Fe-4S] cluster as a cofactor.

It is found in the cytoplasm. It carries out the reaction L-aspartate(89)-[ribosomal protein uS12]-hydrogen + (sulfur carrier)-SH + AH2 + 2 S-adenosyl-L-methionine = 3-methylsulfanyl-L-aspartate(89)-[ribosomal protein uS12]-hydrogen + (sulfur carrier)-H + 5'-deoxyadenosine + L-methionine + A + S-adenosyl-L-homocysteine + 2 H(+). Its function is as follows. Catalyzes the methylthiolation of an aspartic acid residue of ribosomal protein uS12. In Nostoc sp. (strain PCC 7120 / SAG 25.82 / UTEX 2576), this protein is Ribosomal protein uS12 methylthiotransferase RimO.